A 126-amino-acid chain; its full sequence is Glycine cleavage system H protein (126 aa).

Positions 23–105 (AATVGITDHA…YGEGWLLRVR (83 aa)) constitute a Lipoyl-binding domain. Residue Lys-64 is modified to N6-lipoyllysine.

It belongs to the GcvH family. The glycine cleavage system is composed of four proteins: P, T, L and H. The cofactor is (R)-lipoate.

Functionally, the glycine cleavage system catalyzes the degradation of glycine. The H protein shuttles the methylamine group of glycine from the P protein to the T protein. The polypeptide is Glycine cleavage system H protein (Rubrobacter xylanophilus (strain DSM 9941 / JCM 11954 / NBRC 16129 / PRD-1)).